The following is a 132-amino-acid chain: Large ribosomal subunit protein bL20c (132 aa).

It belongs to the bacterial ribosomal protein bL20 family.

It localises to the plastid. It is found in the chloroplast. Its function is as follows. Binds directly to 23S ribosomal RNA and is necessary for the in vitro assembly process of the 50S ribosomal subunit. It is not involved in the protein synthesizing functions of that subunit. This chain is Large ribosomal subunit protein bL20c, found in Coffea arabica (Arabian coffee).